Consider the following 1242-residue polypeptide: Protein jagged-1a (1242 aa).

Residues 1–28 (MILRPSATFAALSAHVLLRCLWMRVCEA) form the signal peptide. The Extracellular segment spans residues 29 to 1070 (SGHFEMQVLS…KQPQNPNVDY (1042 aa)). Asn-141 carries an N-linked (GlcNAc...) asparagine glycan. In terms of domain architecture, DSL spans 186 to 230 (VTCDEHYFGFGCNKFCRPRDDFFGHYTCDHNGNKTCLEGWAGPEC). 2 disulfide bridges follow: Cys-188/Cys-197 and Cys-201/Cys-213. N-linked (GlcNAc...) asparagine glycosylation is present at Asn-218. 39 disulfides stabilise this stretch: Cys-221/Cys-230, Cys-235/Cys-246, Cys-239/Cys-252, Cys-254/Cys-263, Cys-266/Cys-277, Cys-272/Cys-283, Cys-285/Cys-294, Cys-301/Cys-313, Cys-307/Cys-323, Cys-325/Cys-334, Cys-341/Cys-352, Cys-346/Cys-361, Cys-363/Cys-372, Cys-379/Cys-390, Cys-384/Cys-399, Cys-401/Cys-410, Cys-417/Cys-428, Cys-422/Cys-437, Cys-439/Cys-448, Cys-455/Cys-465, Cys-459/Cys-474, Cys-476/Cys-485, Cys-492/Cys-503, Cys-497/Cys-512, Cys-514/Cys-523, Cys-530/Cys-541, Cys-535/Cys-550, Cys-552/Cys-561, Cys-600/Cys-618, Cys-620/Cys-629, Cys-636/Cys-647, Cys-641/Cys-656, Cys-658/Cys-667, Cys-674/Cys-685, Cys-679/Cys-694, Cys-696/Cys-705, Cys-712/Cys-723, Cys-717/Cys-732, and Cys-734/Cys-743. One can recognise an EGF-like 1 domain in the interval 231–264 (NTAICKQGCSIEHGSCKVPGNCRCLYGWQGEYCD). The EGF-like 2; atypical domain occupies 265-295 (QCIPHPGCVHGTCIEPWQCLCDTNWGGQLCD). EGF-like domains lie at 297–335 (DLNT…QNCE) and 337–373 (ADNA…PSCN). Positions 375–411 (NEDDCSPNPCNHSGVCVDLVDGFKCICPVQWTGKTCL) constitute an EGF-like 5; calcium-binding domain. N-linked (GlcNAc...) asparagine glycosylation occurs at Asn-385. The EGF-like 6; calcium-binding domain occupies 413–449 (DANECEESPCVNAHSCRNLIGGYFCECLPGWTGQNCD). Positions 451–486 (NVNDCHGQCLNGGLCKDLVNGYRCVCAAGFAGDRCE) constitute an EGF-like 7; calcium-binding domain. An EGF-like 8; calcium-binding domain is found at 488–524 (DVDECASRPCLNGGRCQDTLNGFQCLCPPGFSGATCQ). EGF-like domains follow at residues 526-562 (DLDY…KNCS) and 575-630 (VIDS…TYCH). N-linked (GlcNAc...) asparagine glycosylation is present at Asn-560. In terms of domain architecture, EGF-like 11; calcium-binding spans 632 to 668 (NINDCESSPCLSGGTCIDKINAYQCICADGWEGPNCE). In terms of domain architecture, EGF-like 12; calcium-binding spans 670-706 (NIDDCRTNPCRDRGVCRDLVNDFYCECENGWKGKTCH). 2 EGF-like domains span residues 708–744 (RESQ…ATCN) and 747–783 (KNSS…PTCS). Residue Asn-748 is glycosylated (N-linked (GlcNAc...) asparagine). 9 cysteine pairs are disulfide-bonded: Cys-751–Cys-762, Cys-756–Cys-771, Cys-773–Cys-782, Cys-789–Cys-800, Cys-794–Cys-809, Cys-811–Cys-820, Cys-827–Cys-838, Cys-832–Cys-847, and Cys-849–Cys-858. Positions 785 to 821 (NSNDCNPQPCYNSGTCVDGDNWYRCECASGFAGPDCR) constitute an EGF-like 15; calcium-binding domain. Residues 823-859 (NINECQSSPCAFGSTCVDEINGYRCLCPPGRTGPRCQ) form the EGF-like 16; calcium-binding domain. The EGF-like 17 domain maps to 917-959 (TGQLCVPVRDEQCFVKPCSSQGECWSAHRPAVRTHCQPDSHCA). Residues Asn-960, Asn-991, and Asn-1046 are each glycosylated (N-linked (GlcNAc...) asparagine). A helical membrane pass occupies residues 1071 to 1095 (MVPLLVSVVTAIWVLALASVFLWCI). Residues 1096–1242 (RHHRKQSSSA…HSLQKMEYIV (147 aa)) are Cytoplasmic-facing. Residues 1191 to 1242 (RDDRLSSNGTDIKKHPQWTNKRDNRDLESQHRVPDSQHRDSQHSLQKMEYIV) are disordered. The segment covering 1210–1232 (NKRDNRDLESQHRVPDSQHRDSQ) has biased composition (basic and acidic residues).

It localises to the membrane. It is found in the cell membrane. Its function is as follows. Ligand for multiple Notch receptors and involved in the mediation of Notch signaling. Seems to be involved in cell-fate decisions. The protein is Protein jagged-1a (jag1a) of Danio rerio (Zebrafish).